Here is a 32-residue protein sequence, read N- to C-terminus: Photosystem I reaction center subunit XII (32 aa).

The helical transmembrane segment at 10–27 threads the bilayer; it reads VVALVSAFVTGILALRLG.

It belongs to the PsaM family.

The protein resides in the plastid. It localises to the chloroplast thylakoid membrane. This Staurastrum punctulatum (Green alga) protein is Photosystem I reaction center subunit XII.